A 436-amino-acid chain; its full sequence is UPF0597 protein YhaM (436 aa).

Belongs to the UPF0597 family.

The polypeptide is UPF0597 protein YhaM (Escherichia coli (strain SE11)).